The chain runs to 312 residues: Zygote arrest protein 1.L (312 aa).

Disordered stretches follow at residues 79-133 and 150-205; these read RDVG…VRFP and FQDK…DQTR. Composition is skewed to polar residues over residues 86–95 and 113–128; these read NPRQDASVQC and PQQS…SPTK. The span at 152 to 196 shows a compositional bias: basic and acidic residues; that stretch reads DKGENLSEKTEALRSEGSRGEGGRPEGKQEDGEIKEQTKMDKADQ. A 3CxxC-type zinc finger spans residues 214-297; that stretch reads KYGYYHCKDC…RQDLCGRCKG (84 aa).

The protein belongs to the ZAR1 family. Ovary.

It localises to the cytoplasm. Its subcellular location is the cytoplasmic ribonucleoprotein granule. Functionally, mRNA-binding protein required for maternal mRNA storage, translation and degradation during oocyte maturation. Probably promotes formation of some phase-separated membraneless compartment that stores maternal mRNAs in oocytes: acts by undergoing liquid-liquid phase separation upon binding to maternal mRNAs. Binds to the 3'-UTR of maternal mRNAs in immature oocytes, inhibiting their translation. The protein is Zygote arrest protein 1.L of Xenopus laevis (African clawed frog).